We begin with the raw amino-acid sequence, 412 residues long: Divalent metal cation transporter MntH (412 aa).

Helical transmembrane passes span 19 to 39 (LALMGPAFIAAIGYIDPGNFA), 46 to 66 (ASFGYQLLWVVVWANLMAMLI), 94 to 114 (VWFYWVQAEIIAMATDLAEFI), 122 to 142 (LILGVSLLQGAVLTGIATFLI), 156 to 176 (VIGGLLLFVAAAYIVELFFSQ), 196 to 216 (AVFLAAGVLGATIMPHVIYLH), 241 to 261 (IAMTIAGFVNLAMMATAAAAF), 290 to 310 (IFGLSLVAAGLSSTVVGTLAG), 322 to 342 (IPLWVRRAVTMAPSFIVILMG), 348 to 368 (ILVMSQVLLSFGIALALVPLL), and 392 to 412 (AIVVLVVALNIWLLVGTALGL).

This sequence belongs to the NRAMP family.

It is found in the cell inner membrane. H(+)-stimulated, divalent metal cation uptake system. The sequence is that of Divalent metal cation transporter MntH from Cronobacter sakazakii (strain ATCC BAA-894) (Enterobacter sakazakii).